Reading from the N-terminus, the 134-residue chain is Small ribosomal subunit protein uS8 (134 aa).

The protein belongs to the universal ribosomal protein uS8 family. As to quaternary structure, part of the 30S ribosomal subunit. Contacts proteins S5 and S12.

Its function is as follows. One of the primary rRNA binding proteins, it binds directly to 16S rRNA central domain where it helps coordinate assembly of the platform of the 30S subunit. This is Small ribosomal subunit protein uS8 from Thermosipho melanesiensis (strain DSM 12029 / CIP 104789 / BI429).